Reading from the N-terminus, the 677-residue chain is Methionine--tRNA ligase (677 aa).

A 'HIGH' region motif is present at residues 15–25 (PYANGSIHLGH). Residues Cys146, Cys149, Cys159, and Cys162 each coordinate Zn(2+). Residues 333–337 (KMSKS) carry the 'KMSKS' region motif. Lys336 serves as a coordination point for ATP. One can recognise a tRNA-binding domain in the interval 575 to 677 (DFAKVDLRVA…AGAKPGHQVK (103 aa)).

The protein belongs to the class-I aminoacyl-tRNA synthetase family. MetG type 1 subfamily. As to quaternary structure, homodimer. It depends on Zn(2+) as a cofactor.

It is found in the cytoplasm. The catalysed reaction is tRNA(Met) + L-methionine + ATP = L-methionyl-tRNA(Met) + AMP + diphosphate. Is required not only for elongation of protein synthesis but also for the initiation of all mRNA translation through initiator tRNA(fMet) aminoacylation. This is Methionine--tRNA ligase from Shigella flexneri serotype 5b (strain 8401).